The sequence spans 109 residues: uncharacterized protein (109 aa).

2 helical membrane-spanning segments follow: residues 24 to 44 (SLGI…SAFV) and 68 to 88 (VIVL…SIFI).

Its subcellular location is the membrane. This is an uncharacterized protein from Saccharomyces cerevisiae (strain ATCC 204508 / S288c) (Baker's yeast).